A 305-amino-acid chain; its full sequence is 17-beta-hydroxysteroid dehydrogenase type 3 (305 aa).

44–73 is an NADP(+) binding site; the sequence is GQWAVITGAGDGIGKAYSFELARHGLNVVL. A substrate-binding site is contributed by Ser-181. Tyr-194 functions as the Proton acceptor in the catalytic mechanism.

This sequence belongs to the short-chain dehydrogenases/reductases (SDR) family. 17-beta-HSD 3 subfamily. Expressed in the testes.

Its subcellular location is the endoplasmic reticulum. It carries out the reaction a 17beta-hydroxy steroid + NADP(+) = a 17-oxo steroid + NADPH + H(+). It catalyses the reaction testosterone + NADP(+) = androst-4-ene-3,17-dione + NADPH + H(+). The catalysed reaction is 17beta-estradiol + NADP(+) = estrone + NADPH + H(+). The enzyme catalyses 3beta-hydroxyandrost-5-en-17-one + NADPH + H(+) = androst-5-en-3beta,17beta-diol + NADP(+). It carries out the reaction 17beta-hydroxy-5alpha-androstan-3-one + NADP(+) = 5alpha-androstan-3,17-dione + NADPH + H(+). It catalyses the reaction androsterone + NADPH + H(+) = 5alpha-androstane-3alpha,17beta-diol + NADP(+). The catalysed reaction is 3beta-hydroxy-5alpha-androstan-17-one + NADPH + H(+) = 5alpha-androstane-3beta,17beta-diol + NADP(+). The enzyme catalyses androst-4-ene-3,11,17-trione + NADPH + H(+) = 17beta-hydroxyandrost-4-ene-3,11-dione + NADP(+). It carries out the reaction 11beta-hydroxyandrost-4-ene-3,17-dione + NADPH + H(+) = 11beta,17beta-dihydroxyandrost-4-ene-3-one + NADP(+). Its pathway is hormone biosynthesis; testosterone biosynthesis. It functions in the pathway steroid metabolism. In terms of biological role, catalyzes the conversion of 17-oxosteroids to 17beta-hydroxysteroids. Favors the reduction of androstenedione to testosterone. Testosterone is the key androgen driving male development and function. Uses NADPH while the two other EDH17B enzymes use NADH. Androgens such as epiandrosterone, dehydroepiandrosterone, androsterone and androstanedione are accepted as substrates and reduced at C-17. Can reduce 11-ketoandrostenedione as well as 11beta-hydroxyandrostenedione at C-17 to the respective testosterone forms. Plays a role in the rate-limiting-step for the maximum level of testosterone production by the testis but does not affect basal testosterone production. The chain is 17-beta-hydroxysteroid dehydrogenase type 3 from Mus musculus (Mouse).